We begin with the raw amino-acid sequence, 207 residues long: Large ribosomal subunit protein uL4 (207 aa).

Positions 47 to 78 are disordered; it reads GTASSKTRAEVRGGGKKPWRQKGTGRARVGSS. A compositionally biased stretch (basic residues) spans 60–71; the sequence is GGKKPWRQKGTG.

It belongs to the universal ribosomal protein uL4 family. As to quaternary structure, part of the 50S ribosomal subunit.

Functionally, one of the primary rRNA binding proteins, this protein initially binds near the 5'-end of the 23S rRNA. It is important during the early stages of 50S assembly. It makes multiple contacts with different domains of the 23S rRNA in the assembled 50S subunit and ribosome. In terms of biological role, forms part of the polypeptide exit tunnel. The polypeptide is Large ribosomal subunit protein uL4 (Syntrophomonas wolfei subsp. wolfei (strain DSM 2245B / Goettingen)).